Consider the following 534-residue polypeptide: GMP synthase [glutamine-hydrolyzing] (534 aa).

Residues 20-210 (MLIILDFGSQ…VYHICDCEPT (191 aa)) enclose the Glutamine amidotransferase type-1 domain. Cys97 acts as the Nucleophile in catalysis. Residues His184 and Glu186 contribute to the active site. Residues 211 to 409 (WTTETFVEEA…LGLPEEIVKR (199 aa)) form the GMPS ATP-PPase domain. 238-244 (SGGVDSS) contributes to the ATP binding site.

Homodimer.

It catalyses the reaction XMP + L-glutamine + ATP + H2O = GMP + L-glutamate + AMP + diphosphate + 2 H(+). The protein operates within purine metabolism; GMP biosynthesis; GMP from XMP (L-Gln route): step 1/1. Catalyzes the synthesis of GMP from XMP. This Synechococcus sp. (strain ATCC 27144 / PCC 6301 / SAUG 1402/1) (Anacystis nidulans) protein is GMP synthase [glutamine-hydrolyzing].